The chain runs to 504 residues: Glycine--tRNA ligase (504 aa).

The substrate site is built by arginine 99 and glutamate 189. Residues 221–223 (RNE), 231–236 (FRVREL), 306–307 (EI), and 365–368 (GVDR) contribute to the ATP site. 236–240 (LEQME) contributes to the substrate binding site. 361 to 365 (EPSAG) contributes to the substrate binding site.

It belongs to the class-II aminoacyl-tRNA synthetase family. In terms of assembly, homodimer.

The protein localises to the cytoplasm. The catalysed reaction is tRNA(Gly) + glycine + ATP = glycyl-tRNA(Gly) + AMP + diphosphate. In terms of biological role, catalyzes the attachment of glycine to tRNA(Gly). The polypeptide is Glycine--tRNA ligase (Deinococcus geothermalis (strain DSM 11300 / CIP 105573 / AG-3a)).